Consider the following 97-residue polypeptide: Co-chaperonin GroES (97 aa).

This sequence belongs to the GroES chaperonin family. As to quaternary structure, heptamer of 7 subunits arranged in a ring. Interacts with the chaperonin GroEL.

It is found in the cytoplasm. In terms of biological role, together with the chaperonin GroEL, plays an essential role in assisting protein folding. The GroEL-GroES system forms a nano-cage that allows encapsulation of the non-native substrate proteins and provides a physical environment optimized to promote and accelerate protein folding. GroES binds to the apical surface of the GroEL ring, thereby capping the opening of the GroEL channel. This is Co-chaperonin GroES from Pseudomonas entomophila (strain L48).